A 212-amino-acid chain; its full sequence is Transcriptional regulator GfcR (212 aa).

The protein belongs to the purine/pyrimidine phosphoribosyltransferase family. GfcR subfamily.

Functionally, DNA-binding transcriptional regulator that functions as a regulator of central sugar catabolic pathways. This Halobacterium salinarum (strain ATCC 29341 / DSM 671 / R1) protein is Transcriptional regulator GfcR.